A 79-amino-acid polypeptide reads, in one-letter code: uncharacterized protein (79 aa).

This is an uncharacterized protein from Rhizobium leguminosarum.